A 95-amino-acid chain; its full sequence is Aspartyl/glutamyl-tRNA(Asn/Gln) amidotransferase subunit C (95 aa).

The protein belongs to the GatC family. Heterotrimer of A, B and C subunits.

It catalyses the reaction L-glutamyl-tRNA(Gln) + L-glutamine + ATP + H2O = L-glutaminyl-tRNA(Gln) + L-glutamate + ADP + phosphate + H(+). It carries out the reaction L-aspartyl-tRNA(Asn) + L-glutamine + ATP + H2O = L-asparaginyl-tRNA(Asn) + L-glutamate + ADP + phosphate + 2 H(+). Functionally, allows the formation of correctly charged Asn-tRNA(Asn) or Gln-tRNA(Gln) through the transamidation of misacylated Asp-tRNA(Asn) or Glu-tRNA(Gln) in organisms which lack either or both of asparaginyl-tRNA or glutaminyl-tRNA synthetases. The reaction takes place in the presence of glutamine and ATP through an activated phospho-Asp-tRNA(Asn) or phospho-Glu-tRNA(Gln). In Chlorobaculum tepidum (strain ATCC 49652 / DSM 12025 / NBRC 103806 / TLS) (Chlorobium tepidum), this protein is Aspartyl/glutamyl-tRNA(Asn/Gln) amidotransferase subunit C.